Here is a 344-residue protein sequence, read N- to C-terminus: Arginine N-succinyltransferase (344 aa).

Leucine 125 contacts succinyl-CoA. Catalysis depends on histidine 229, which acts as the Proton donor.

It belongs to the arginine N-succinyltransferase family.

The catalysed reaction is succinyl-CoA + L-arginine = N(2)-succinyl-L-arginine + CoA + H(+). It participates in amino-acid degradation; L-arginine degradation via AST pathway; L-glutamate and succinate from L-arginine: step 1/5. Functionally, catalyzes the transfer of succinyl-CoA to arginine to produce N(2)-succinylarginine. The protein is Arginine N-succinyltransferase of Salmonella arizonae (strain ATCC BAA-731 / CDC346-86 / RSK2980).